The following is a 956-amino-acid chain: MAKVRVHELARELGVDSKTVLAKLNELGEFVKSASSTIEAPVVRRLRESFPADSGGAANGAPAAPKPARAPKPAPKAAPAPPVEEAPAEPAPPAAPEVVAAPEAPVAAPEPPAPSREAEVPEAPAAERPAAQARPATPGPRPAPRAAEKPADTRTPRPGNNPFASSQGMPRPGGQGGPRPGGPRPSGGGGPRPGNNPFAPSQGMPRPGGSGAAGPRPGGTGAAGPRPGGSGQGGSRPSPGMMPGRSAVGRPGAPARGGSGGPGGGRGGPGGGRGGGGGFGGAPGRGGPGGAPGGGGGFSGGGRSGRGGRGGTQGAFGRAGGKPVRARKSRRAKRQEFEQMSAPSIGGVQVPRGDGTTVVRIRRGASLSDFADRIDANPASLVTVLFHLGEMATVTQALDAGTFEALGAELGYVIEIVSPEDEERELLGSFDIDLDAEAAAESDEDLEARPPVVTVMGHVDHGKTRLLDAIRSTDVVAGEAGGITQHIGAYQVHVTHEDADRAVTFLDTPGHEAFTAMRARGADVTDIAILVVAADDGVMPQTIEALNHAQAANVPIVVAVNKVDKEGANPDKVMQQLTEYNLVAEAYGGDTMFVNVSAKNGTGIDELLEAVLLTADAALDLRANPNKDARGVAIEANLDKGRGAVATVLVQSGTLTVGDSIVAGTAYGRVRAMFDENGDNLSEATPSRPVQVLGLTSVPRAGDSFLVAPDDRTARQIADKRDAAERAATLAKRRKRISLEDFTQALEQGKVSTLNLVLKGDVSGAVEALEDALLQLDVGAEVDLRIIHRGVGGITQNDVNLATVDNAIIIGFNVRPDVRVAELADREGVDIRYYSVIYAAIEDVENSLKGMLKPEFEEVQLGTAEVLQVFRSSKFGNIAGSRVRSGLIRRGASARVLRDSVVIGDNLSIGSLRREKDDVTEVRDGFECGIGLGSFNDLREGDVIETFEVREKERAS.

The tract at residues 50 to 351 (FPADSGGAAN…APSIGGVQVP (302 aa)) is disordered. The span at 64 to 95 (APKPARAPKPAPKAAPAPPVEEAPAEPAPPAA) shows a compositional bias: pro residues. 2 stretches are compositionally biased toward low complexity: residues 96–107 (PEVVAAPEAPVA) and 121–136 (PEAP…ARPA). Over residues 146–155 (AAEKPADTRT) the composition is skewed to basic and acidic residues. Composition is skewed to gly residues over residues 171 to 192 (RPGG…GGPR) and 206 to 234 (RPGG…GQGG). The segment covering 235–254 (SRPSPGMMPGRSAVGRPGAP) has biased composition (low complexity). The segment covering 255 to 320 (ARGGSGGPGG…GTQGAFGRAG (66 aa)) has biased composition (gly residues). Positions 324-333 (VRARKSRRAK) are enriched in basic residues. Residues 448–619 (ARPPVVTVMG…AVLLTADAAL (172 aa)) enclose the tr-type G domain. The G1 stretch occupies residues 457–464 (GHVDHGKT). Residue 457–464 (GHVDHGKT) coordinates GTP. The tract at residues 482–486 (GITQH) is G2. The G3 stretch occupies residues 507–510 (DTPG). GTP is bound by residues 507 to 511 (DTPGH) and 561 to 564 (NKVD). The G4 stretch occupies residues 561–564 (NKVD). A G5 region spans residues 597–599 (SAK).

Belongs to the TRAFAC class translation factor GTPase superfamily. Classic translation factor GTPase family. IF-2 subfamily.

The protein localises to the cytoplasm. One of the essential components for the initiation of protein synthesis. Protects formylmethionyl-tRNA from spontaneous hydrolysis and promotes its binding to the 30S ribosomal subunits. Also involved in the hydrolysis of GTP during the formation of the 70S ribosomal complex. The polypeptide is Translation initiation factor IF-2 (Beutenbergia cavernae (strain ATCC BAA-8 / DSM 12333 / CCUG 43141 / JCM 11478 / NBRC 16432 / NCIMB 13614 / HKI 0122)).